A 328-amino-acid chain; its full sequence is Purple acid phosphatase 7 (328 aa).

A signal peptide spans 1–24 (MKMHVCFSVILMFLSIFFINGALS). Position 48 (Asp-48) interacts with Fe cation. An N-linked (GlcNAc...) asparagine glycan is attached at Asn-56. Asp-81 and Tyr-84 together coordinate Fe cation. A Zn(2+)-binding site is contributed by Asp-81. Zn(2+) contacts are provided by Asn-119 and His-213. His-222 functions as the Proton donor in the catalytic mechanism. His-248 is a Zn(2+) binding site. 248–250 (HDH) is a substrate binding site. Residue His-250 coordinates Fe cation.

The protein belongs to the metallophosphoesterase superfamily. Purple acid phosphatase family. Homodimer. Fe cation is required as a cofactor. Requires Zn(2+) as cofactor. In terms of tissue distribution, expressed in roots, stems, leaves, flowers and siliques.

It localises to the secreted. The catalysed reaction is a phosphate monoester + H2O = an alcohol + phosphate. This Arabidopsis thaliana (Mouse-ear cress) protein is Purple acid phosphatase 7 (PAP7).